Consider the following 147-residue polypeptide: Large ribosomal subunit protein uL16 (147 aa).

Positions 1 to 20 are disordered; the sequence is MLMPKKVKHRKVQRGRMKGK.

The protein belongs to the universal ribosomal protein uL16 family. As to quaternary structure, part of the 50S ribosomal subunit.

Functionally, binds 23S rRNA and is also seen to make contacts with the A and possibly P site tRNAs. The sequence is that of Large ribosomal subunit protein uL16 from Clostridium kluyveri (strain ATCC 8527 / DSM 555 / NBRC 12016 / NCIMB 10680 / K1).